A 367-amino-acid polypeptide reads, in one-letter code: E3 ubiquitin-protein ligase RGLG3 (367 aa).

Residues 37 to 257 (NLILGIDFTK…KEAAFALAAL (221 aa)) form the VWFA domain. The RING-type zinc-finger motif lies at 323–356 (CPICLTNPKDMAFSCGHTTCKECGVVITTCPLCR).

Interacts with UBC30, GRXS17 and GLB3. Binds to and coactivates GAF1/IDD2 and ENY/IDD1. In terms of tissue distribution, widely expressed.

Its subcellular location is the cytoplasm. The protein resides in the nucleus. It catalyses the reaction S-ubiquitinyl-[E2 ubiquitin-conjugating enzyme]-L-cysteine + [acceptor protein]-L-lysine = [E2 ubiquitin-conjugating enzyme]-L-cysteine + N(6)-ubiquitinyl-[acceptor protein]-L-lysine.. Functionally, possesses E3 ubiquitin-protein ligase in vitro. Acts as upstream modulator of jasmonate (JA) signaling in response to various stimuli, such as JA-inhibited root growth, JA-inductive gene expression, coronatine-mediated pathogen susceptibility, wound-stimulated expression of JA-responsive genes and wound-induced JA biosynthesis. Controls fumonisin B1 (FB1)-triggered programmed cell death (PCD) by modulating the JA signaling pathway. May mediate salicylic acid (SA) suppression of JA signaling in FB1-induced responses. May mediate the formation of 'Lys-48'-linked multiubiquitin chains. Mediates the polyubiquitination and subsequent proteasomal degradation of the target protein GRXS17. This is E3 ubiquitin-protein ligase RGLG3 from Arabidopsis thaliana (Mouse-ear cress).